Consider the following 914-residue polypeptide: Thyroid peroxidase (914 aa).

The first 31 residues, 1 to 31, serve as a signal peptide directing secretion; that stretch reads MRTLGAMAVMLVVMGTAIFLPFLLRSRDILG. The Extracellular portion of the chain corresponds to 32–834; sequence GKTMTSHVIS…TCIDSGRLPR (803 aa). N123 is a glycosylation site (N-linked (GlcNAc...) asparagine). Residues C136 and C152 are joined by a disulfide bond. D232 lines the heme b pocket. H233 (proton acceptor) is an active-site residue. D234 serves as a coordination point for Ca(2+). Intrachain disulfides connect C253-C263 and C257-C278. N271 and N299 each carry an N-linked (GlcNAc...) asparagine glycan. The Ca(2+) site is built by T313, F315, D317, and S319. The N-linked (GlcNAc...) asparagine glycan is linked to N334. Residues E387 and H482 each contribute to the heme b site. 7 disulfide bridges follow: C586–C643, C684–C709, C730–C770, C756–C782, C788–C802, C796–C811, and C813–C826. N603 carries N-linked (GlcNAc...) asparagine glycosylation. The Sushi domain maps to 728–783; the sequence is DKCVFPEKVDNGNFVHCEESGKLVLVYSCFHGYKLQGQEQVTCTQNGWDSEPPVCK. The 44-residue stretch at 784-827 folds into the EGF-like; calcium-binding domain; it reads DVNECADLTHPPCHSSAKCKNTKGSFQCVCTDPYMLGEDEKTCI. Residues 835–859 form a helical membrane-spanning segment; the sequence is ASWVSIALGALLIGGLASLSWTVIC. Residues 860-914 are Cytoplasmic-facing; the sequence is RWTHADKKSTLLITERVTMESGFRKSQESGISPQKAEVQDAEQEPAYGSRVLLCE. The segment at 882-907 is disordered; it reads FRKSQESGISPQKAEVQDAEQEPAYG.

Belongs to the peroxidase family. XPO subfamily. In terms of assembly, interacts with DUOX1, DUOX2 and CYBA. Ca(2+) is required as a cofactor. Requires heme b as cofactor. Post-translationally, heme is covalently bound through a H(2)O(2)-dependent autocatalytic process. Heme insertion is important for the delivery of protein at the cell surface. Cleaved in its N-terminal part.

Its subcellular location is the membrane. The catalysed reaction is 2 iodide + H2O2 + 2 H(+) = diiodine + 2 H2O. It catalyses the reaction [thyroglobulin]-L-tyrosine + iodide + H2O2 + H(+) = [thyroglobulin]-3-iodo-L-tyrosine + 2 H2O. It carries out the reaction [thyroglobulin]-3-iodo-L-tyrosine + iodide + H2O2 + H(+) = [thyroglobulin]-3,5-diiodo-L-tyrosine + 2 H2O. The enzyme catalyses 2 [thyroglobulin]-3,5-diiodo-L-tyrosine + H2O2 = [thyroglobulin]-L-thyroxine + [thyroglobulin]-dehydroalanine + 2 H2O. The catalysed reaction is [thyroglobulin]-3-iodo-L-tyrosine + [thyroglobulin]-3,5-diiodo-L-tyrosine + H2O2 = [thyroglobulin]-3,3',5-triiodo-L-thyronine + [thyroglobulin]-dehydroalanine + 2 H2O. It participates in hormone biosynthesis; thyroid hormone biosynthesis. Functionally, iodination and coupling of the hormonogenic tyrosines in thyroglobulin to yield the thyroid hormones T(3) and T(4). This is Thyroid peroxidase (Tpo) from Rattus norvegicus (Rat).